Consider the following 97-residue polypeptide: Aspartyl/glutamyl-tRNA(Asn/Gln) amidotransferase subunit C (97 aa).

This sequence belongs to the GatC family. As to quaternary structure, heterotrimer of A, B and C subunits.

The enzyme catalyses L-glutamyl-tRNA(Gln) + L-glutamine + ATP + H2O = L-glutaminyl-tRNA(Gln) + L-glutamate + ADP + phosphate + H(+). The catalysed reaction is L-aspartyl-tRNA(Asn) + L-glutamine + ATP + H2O = L-asparaginyl-tRNA(Asn) + L-glutamate + ADP + phosphate + 2 H(+). Functionally, allows the formation of correctly charged Asn-tRNA(Asn) or Gln-tRNA(Gln) through the transamidation of misacylated Asp-tRNA(Asn) or Glu-tRNA(Gln) in organisms which lack either or both of asparaginyl-tRNA or glutaminyl-tRNA synthetases. The reaction takes place in the presence of glutamine and ATP through an activated phospho-Asp-tRNA(Asn) or phospho-Glu-tRNA(Gln). In Anaeromyxobacter dehalogenans (strain 2CP-C), this protein is Aspartyl/glutamyl-tRNA(Asn/Gln) amidotransferase subunit C.